The primary structure comprises 243 residues: Biosynthetic peptidoglycan transglycosylase (243 aa).

A helical transmembrane segment spans residues 22–42 (LIVLLVLALMSVLQVIVFRFV).

It belongs to the glycosyltransferase 51 family.

The protein resides in the cell inner membrane. The enzyme catalyses [GlcNAc-(1-&gt;4)-Mur2Ac(oyl-L-Ala-gamma-D-Glu-L-Lys-D-Ala-D-Ala)](n)-di-trans,octa-cis-undecaprenyl diphosphate + beta-D-GlcNAc-(1-&gt;4)-Mur2Ac(oyl-L-Ala-gamma-D-Glu-L-Lys-D-Ala-D-Ala)-di-trans,octa-cis-undecaprenyl diphosphate = [GlcNAc-(1-&gt;4)-Mur2Ac(oyl-L-Ala-gamma-D-Glu-L-Lys-D-Ala-D-Ala)](n+1)-di-trans,octa-cis-undecaprenyl diphosphate + di-trans,octa-cis-undecaprenyl diphosphate + H(+). The protein operates within cell wall biogenesis; peptidoglycan biosynthesis. In terms of biological role, peptidoglycan polymerase that catalyzes glycan chain elongation from lipid-linked precursors. The protein is Biosynthetic peptidoglycan transglycosylase of Xylella fastidiosa (strain 9a5c).